A 114-amino-acid chain; its full sequence is Kita-kyushu lung cancer antigen 1 homolog (114 aa).

Residues 1 to 4 are Cytoplasmic-facing; it reads MNVY. Residues 5–22 traverse the membrane as a helical; Signal-anchor for type II membrane protein segment; the sequence is LLLASGILCALMTVFWKY. Topologically, residues 23 to 114 are extracellular; that stretch reads RRFQRNTGEM…RSASAHRKST (92 aa). Residue N84 is glycosylated (N-linked (GlcNAc...) asparagine).

It localises to the cell membrane. This chain is Kita-kyushu lung cancer antigen 1 homolog (CT83), found in Macaca fascicularis (Crab-eating macaque).